The chain runs to 190 residues: Ras-like GTP-binding protein RhoL (190 aa).

18–25 (GDGMVGKT) lines the GTP pocket. The short motif at 40–48 (YIPTVFDNH) is the Effector region element. GTP contacts are provided by residues 65–69 (DTAGQ) and 123–126 (TKLD). The residue at position 187 (Cys187) is a Cysteine methyl ester. Cys187 carries the S-geranylgeranyl cysteine lipid modification. The propeptide at 188-190 (KIL) is removed in mature form.

The protein belongs to the small GTPase superfamily. Rho family. In terms of tissue distribution, highly expressed in the embryonic cephalic mesoderm starting from stage 6 and fading by stage 11. Hemocyte precursor cells.

The protein localises to the cell membrane. Functionally, essential for the maturation of hemocytes. This is Ras-like GTP-binding protein RhoL (RhoL) from Drosophila melanogaster (Fruit fly).